The chain runs to 1591 residues: Rho guanine nucleotide exchange factor TIAM1 (1591 aa).

The segment at 1–70 is disordered; it reads MGNAESQNVD…TPSIPQSLAE (70 aa). G2 carries the N-myristoyl glycine lipid modification. The span at 8–19 shows a compositional bias: basic and acidic residues; that stretch reads NVDHEFYGEKHA. Residues 20 to 49 show a composition bias toward basic residues; the sequence is SLGRKHTSRSLRLSHKTRRTRHASSGKAIH. Over residues 53 to 67 the composition is skewed to low complexity; it reads EVSTRSSSTPSIPQS. Residues S231, S356, and S358 each carry the phosphoserine modification. Disordered regions lie at residues 305 to 380 and 393 to 422; these read QISL…DRAR and MSTT…SPGQ. Polar residues predominate over residues 340–359; the sequence is TTDTDLLSRRSNATNSSYSP. The span at 367 to 376 shows a compositional bias: low complexity; that stretch reads GSDSGSSSTG. Residues 412-422 are compositionally biased toward polar residues; the sequence is QSSGTLSSPGQ. The PH 1 domain occupies 434 to 549; it reads VRKAGALAVK…TAIHSACAAA (116 aa). S695 carries the phosphoserine modification. One can recognise an RBD domain in the interval 765–832; that stretch reads TPSWFCLPNN…QPEEDIYELL (68 aa). Y829 bears the Phosphotyrosine; by NTRK2 mark. The region spanning 845 to 908 is the PDZ domain; the sequence is NIHIEKSDAA…NNRAAGTLNS (64 aa). The tract at residues 933–1034 is disordered; sequence GVELLENPPH…TSPQLATTRQ (102 aa). The span at 958 to 975 shows a compositional bias: polar residues; that stretch reads LTSNPGHSLSSEQGSSAE. A compositionally biased stretch (acidic residues) spans 977 to 990; it reads APEEGEGPDLESSD. Over residues 1014–1028 the composition is skewed to low complexity; the sequence is PSDSSPSPQDATSPQ. Residues 1040–1234 form the DH domain; it reads KLRKVICELL…NKVASHINEM (195 aa). One can recognise a PH 2 domain in the interval 1261–1397; the sequence is DLSMGDLLLH…KSVHSILRDK (137 aa). Phosphotyrosine is present on Y1323. Glycyl lysine isopeptide (Lys-Gly) (interchain with G-Cter in ubiquitin) cross-links involve residues K1404 and K1420. Residues 1456–1481 form a disordered region; sequence TIDSDAISASSPEKEPQQPAGGGDTD. Position 1519 is a phosphoserine (S1519).

The protein belongs to the TIAM family. As to quaternary structure, component of the Par polarity complex, composed of at least phosphorylated PRKCZ, PARD3 and TIAM1. Interacts with BAIAP2. Interacts (via PDZ domain) with CNTNAP4, SDC1 and SDC3 (via C-terminus). Interacts with CD44, PARD3 and MAPK8IP2. Interacts with EPHA8; regulates clathrin-mediated endocytosis of EPHA8. Interacts with NTRK2; mediates the activation of RAC1 by BDNF. In terms of processing, ubiquitinated. Undergoes 'Lys-48' ubiquitination at Lys-1404 and Lys-1420 by a CUL3(KBTBD6/7) E3 ubiquitin ligase complex composed of CUL3, RBX1, KBTBD6 and KBTBD7. 'Lys-48' ubiquitination at Lys-1404 and Lys-1420 triggers proteasomal degradation. Ubiquitination at Lys-1404 and Lys-1420 by CUL3(KBTBD6/7) also requires the membrane-associated protein GABARAP and may therefore be spatially restricted within the cell. Highly expressed in brain and testis and at low or moderate levels in almost all other normal tissues. Found in virtually all analyzed tumor cell lines including B- and T-lymphomas, neuroblastomas, melanomas and carcinomas.

The protein resides in the cell junction. It localises to the cell membrane. In terms of biological role, guanyl-nucleotide exchange factor that activates RHO-like proteins and connects extracellular signals to cytoskeletal activities. Activates RAC1, CDC42, and to a lesser extent RHOA and their downstream signaling to regulate processes like cell adhesion and cell migration. The chain is Rho guanine nucleotide exchange factor TIAM1 from Mus musculus (Mouse).